Here is a 392-residue protein sequence, read N- to C-terminus: Fasciculation and elongation protein zeta-1 (392 aa).

The interval 1–36 is disordered; the sequence is MEAPLVSLDEEFEDIRPSCTEEPEEKPQCLYGTSPH. The residue at position 58 (Ser58) is a Phosphoserine. Residues 175–196 are disordered; sequence MQNSPDPEEEEEVLEEEDGGEI. A compositionally biased stretch (acidic residues) spans 180-194; that stretch reads DPEEEEEVLEEEDGG. A coiled-coil region spans residues 230 to 298; that stretch reads SELTELLDRV…KKRRKEKGLS (69 aa). A phosphoserine mark is found at Ser298 and Ser316.

The protein belongs to the zygin family. In terms of assembly, homodimer. Interacts with the NH2-terminal variable region (V1) of PKC zeta and weakly with that of PKC epsilon. Interacts with UBE4B and SAP30L. Interacts with SCOC and ULK1; SCOC interferes with ULK1-binding to FEZ1. Directly interacts with SCOC and UVRAG. Stabilizes the interaction between SCOC and UVRAG during amino acid starvation. Phosphorylated by protein kinase C zeta; which enhances interaction with UBE4B and polyubiquitination. In terms of processing, polyubiquitinated in a UBE4B-dependent manner; which does not lead to proteasomal degradation and may be important for neurogenic activity. Polyubiquitin linkage seems to be mainly through Lys-26.

The protein resides in the cytoplasm. It localises to the cytoskeleton. Its subcellular location is the microtubule organizing center. The protein localises to the centrosome. It is found in the cell membrane. Functionally, may be involved in axonal outgrowth as component of the network of molecules that regulate cellular morphology and axon guidance machinery. May participate in the transport of mitochondria and other cargos along microtubules. In Mus musculus (Mouse), this protein is Fasciculation and elongation protein zeta-1 (Fez1).